The following is a 187-amino-acid chain: ATP synthase subunit b 2 (187 aa).

Residues 1–13 (MAESHATGTTTHT) are compositionally biased toward polar residues. The segment at 1–21 (MAESHATGTTTHTEVPHGKPE) is disordered. The chain crosses the membrane as a helical span at residues 31–53 (ASQLVSFAIAFALLYVIVSRFAL).

The protein belongs to the ATPase B chain family. F-type ATPases have 2 components, F(1) - the catalytic core - and F(0) - the membrane proton channel. F(1) has five subunits: alpha(3), beta(3), gamma(1), delta(1), epsilon(1). F(0) has three main subunits: a(1), b(2) and c(10-14). The alpha and beta chains form an alternating ring which encloses part of the gamma chain. F(1) is attached to F(0) by a central stalk formed by the gamma and epsilon chains, while a peripheral stalk is formed by the delta and b chains.

The protein localises to the cell inner membrane. In terms of biological role, f(1)F(0) ATP synthase produces ATP from ADP in the presence of a proton or sodium gradient. F-type ATPases consist of two structural domains, F(1) containing the extramembraneous catalytic core and F(0) containing the membrane proton channel, linked together by a central stalk and a peripheral stalk. During catalysis, ATP synthesis in the catalytic domain of F(1) is coupled via a rotary mechanism of the central stalk subunits to proton translocation. Component of the F(0) channel, it forms part of the peripheral stalk, linking F(1) to F(0). The b'-subunit is a diverged and duplicated form of b found in plants and photosynthetic bacteria. This is ATP synthase subunit b 2 (atpF2) from Afipia carboxidovorans (strain ATCC 49405 / DSM 1227 / KCTC 32145 / OM5) (Oligotropha carboxidovorans).